We begin with the raw amino-acid sequence, 305 residues long: Oxygen-dependent coproporphyrinogen-III oxidase (305 aa).

S92 serves as a coordination point for substrate. The a divalent metal cation site is built by H96 and H106. H106 acts as the Proton donor in catalysis. Substrate is bound at residue 108-110; it reads NVR. A divalent metal cation contacts are provided by H145 and H175. The interval 239-274 is important for dimerization; that stretch reads YVEFNLLFDRGTLFGLQSGGRAESILISLPPLVRWE. 257–259 is a binding site for substrate; the sequence is GGR.

The protein belongs to the aerobic coproporphyrinogen-III oxidase family. Homodimer. A divalent metal cation serves as cofactor.

The protein resides in the cytoplasm. The catalysed reaction is coproporphyrinogen III + O2 + 2 H(+) = protoporphyrinogen IX + 2 CO2 + 2 H2O. It functions in the pathway porphyrin-containing compound metabolism; protoporphyrin-IX biosynthesis; protoporphyrinogen-IX from coproporphyrinogen-III (O2 route): step 1/1. In terms of biological role, involved in the heme biosynthesis. Catalyzes the aerobic oxidative decarboxylation of propionate groups of rings A and B of coproporphyrinogen-III to yield the vinyl groups in protoporphyrinogen-IX. The polypeptide is Oxygen-dependent coproporphyrinogen-III oxidase (Xylella fastidiosa (strain Temecula1 / ATCC 700964)).